The primary structure comprises 88 residues: Mitochondrial import inner membrane translocase subunit TIM9 (88 aa).

Positions 35–59 match the Twin CX3C motif motif; sequence CFDDCVNDFTSNNLTTKETGCITKC. Disulfide bonds link cysteine 35–cysteine 59 and cysteine 39–cysteine 55.

It belongs to the small Tim family. As to quaternary structure, heterohexamer; composed of 3 copies of TIM9 and 3 copies of TIM10, named soluble 70 kDa complex. Associates with the TIM22 complex, whose core is composed of TIM22 and TIM54. Interacts with the transmembrane regions of multi-pass transmembrane proteins in transit.

It localises to the mitochondrion inner membrane. Mitochondrial intermembrane chaperone that participates in the import and insertion of multi-pass transmembrane proteins into the mitochondrial inner membrane. Also required for the transfer of beta-barrel precursors from the TOM complex to the sorting and assembly machinery (SAM complex) of the outer membrane. Acts as a chaperone-like protein that protects the hydrophobic precursors from aggregation and guide them through the mitochondrial intermembrane space. The chain is Mitochondrial import inner membrane translocase subunit TIM9 (TIM9) from Debaryomyces hansenii (strain ATCC 36239 / CBS 767 / BCRC 21394 / JCM 1990 / NBRC 0083 / IGC 2968) (Yeast).